A 157-amino-acid chain; its full sequence is Protein-export protein SecB (157 aa).

It belongs to the SecB family. As to quaternary structure, homotetramer, a dimer of dimers. One homotetramer interacts with 1 SecA dimer.

The protein resides in the cytoplasm. In terms of biological role, one of the proteins required for the normal export of preproteins out of the cell cytoplasm. It is a molecular chaperone that binds to a subset of precursor proteins, maintaining them in a translocation-competent state. It also specifically binds to its receptor SecA. The sequence is that of Protein-export protein SecB from Magnetococcus marinus (strain ATCC BAA-1437 / JCM 17883 / MC-1).